A 393-amino-acid chain; its full sequence is Outer membrane protein assembly factor BamB (393 aa).

Residues 1-19 (MQLRKTLLVGLVSVALLSG) form the signal peptide. The N-palmitoyl cysteine moiety is linked to residue C20. Residue C20 is the site of S-diacylglycerol cysteine attachment.

The protein belongs to the BamB family. As to quaternary structure, part of the Bam complex, which is composed of the outer membrane protein BamA, and four lipoproteins BamB, BamC, BamD and BamE.

It localises to the cell outer membrane. In terms of biological role, part of the outer membrane protein assembly complex, which is involved in assembly and insertion of beta-barrel proteins into the outer membrane. The protein is Outer membrane protein assembly factor BamB of Yersinia pestis.